Here is a 453-residue protein sequence, read N- to C-terminus: D-aminoacyl-tRNA deacylase (453 aa).

The segment at 428 to 453 (VRADVALHERPRERVRRPSDDEGKGN) is disordered.

The protein belongs to the DtdA deacylase family. As to quaternary structure, monomer. Zn(2+) is required as a cofactor.

The catalysed reaction is a D-aminoacyl-tRNA + H2O = a tRNA + a D-alpha-amino acid + H(+). It carries out the reaction glycyl-tRNA(Ala) + H2O = tRNA(Ala) + glycine + H(+). Its function is as follows. D-aminoacyl-tRNA deacylase with broad substrate specificity. By recycling D-aminoacyl-tRNA to D-amino acids and free tRNA molecules, this enzyme counteracts the toxicity associated with the formation of D-aminoacyl-tRNA entities in vivo. The protein is D-aminoacyl-tRNA deacylase of Halobacterium salinarum (strain ATCC 29341 / DSM 671 / R1).